The primary structure comprises 146 residues: D-aminoacyl-tRNA deacylase (146 aa).

Positions 138–139 (GP) match the Gly-cisPro motif, important for rejection of L-amino acids motif.

This sequence belongs to the DTD family. In terms of assembly, homodimer.

It is found in the cytoplasm. It catalyses the reaction glycyl-tRNA(Ala) + H2O = tRNA(Ala) + glycine + H(+). The catalysed reaction is a D-aminoacyl-tRNA + H2O = a tRNA + a D-alpha-amino acid + H(+). Its function is as follows. An aminoacyl-tRNA editing enzyme that deacylates mischarged D-aminoacyl-tRNAs. Also deacylates mischarged glycyl-tRNA(Ala), protecting cells against glycine mischarging by AlaRS. Acts via tRNA-based rather than protein-based catalysis; rejects L-amino acids rather than detecting D-amino acids in the active site. By recycling D-aminoacyl-tRNA to D-amino acids and free tRNA molecules, this enzyme counteracts the toxicity associated with the formation of D-aminoacyl-tRNA entities in vivo and helps enforce protein L-homochirality. This chain is D-aminoacyl-tRNA deacylase, found in Xanthomonas campestris pv. campestris (strain 8004).